The sequence spans 251 residues: 2-amino-5-chloromuconate deaminase (251 aa).

Monomer.

It carries out the reaction (2Z,4E)-2-aminomuconate + H2O = (2Z,4E)-2-hydroxyhexa-2,4-dienedioate + NH4(+). It participates in xenobiotic degradation; 4-chloronitrobenzene degradation. Its pathway is xenobiotic degradation; nitrobenzene degradation. Its activity is regulated as follows. Cysteine residue modifying agents such as p-chloromercuribenzoate and the SH-binding metals Zn(2+), Ni(2+) and Cu(2+) completely inhibit deaminase activity, whereas Ca(2+), Mg(2+) and the histidine residue-modifying agent diethyl pyrocarbonate inhibit the activity by 23 to 50%. Functionally, involved in the biodegradation of xenobiotic compounds, such as nitrobenzene and 4-chloronitrobenzene (4-CNB). CnbZ preferentially catalyzes the deamination of 2-amino-5-chloromuconate (2A5CM) to yield 2-hydroxy-5-chloromuconate (2H5CM). Also able to catalyze the deamination of 2-aminomuconate to yield 2-hydroxymuconate, which spontaneously converts into its keto form, 2-oxalocrotonate. This is 2-amino-5-chloromuconate deaminase from Comamonas testosteroni (Pseudomonas testosteroni).